We begin with the raw amino-acid sequence, 200 residues long: MSNLNKDTEHTNGGGNVEEEVRTLFVSGLPVDIKPRELYLLFRPFKGYEGSLIKLTSKQPVGFVTFDSRAGAEAAKNALNGIRFDPENPQTLRLEFAKANTKMAKSKLMATPNPTNIHPALGAHFIARDPYDLTGAALIPASPEAWAPYPLYTTELTPAIPHAAFTYPAAAAAAAALHAQMRWYPPSEATQQGWKSRQFC.

One can recognise an RRM domain in the interval 22 to 99; it reads RTLFVSGLPV…QTLRLEFAKA (78 aa). Residues 32–42 form an important for homodimerization region; it reads DIKPRELYLLF.

In terms of assembly, homodimer. In terms of tissue distribution, expressed in developing heart.

It localises to the cytoplasm. It is found in the nucleus. The protein localises to the stress granule. In terms of biological role, RNA-binding protein involved in the regulation of smooth muscle cell differentiation and proliferation in the gastrointestinal system. Binds NOG mRNA, the major inhibitor of the bone morphogenetic protein (BMP) pathway. Mediates an increase of NOG mRNA levels, thereby contributing to the negative regulation of BMP signaling pathway and promoting reversible dedifferentiation and proliferation of smooth muscle cells. Acts as a pre-mRNA alternative splicing regulator. Mediates ACTN1 and FLNB alternative splicing. Likely binds to mRNA tandem CAC trinucleotide or CA dinucleotide motifs. This is RNA-binding protein with multiple splicing 2 from Gallus gallus (Chicken).